The sequence spans 612 residues: Methionine--tRNA ligase (612 aa).

Residues 12 to 22 (PYANGPRHIGH) carry the 'HIGH' region motif. Zn(2+) contacts are provided by cysteine 144, cysteine 147, cysteine 157, and cysteine 160. Positions 350–354 (KFSSS) match the 'KMSKS' region motif. Residue serine 353 coordinates ATP. The tract at residues 580 to 612 (IQPGTQLSKPKPLFPKLDPELAETGPEWAPVQK) is disordered.

Belongs to the class-I aminoacyl-tRNA synthetase family. MetG type 1 subfamily. Monomer. The cofactor is Zn(2+).

The protein resides in the cytoplasm. The enzyme catalyses tRNA(Met) + L-methionine + ATP = L-methionyl-tRNA(Met) + AMP + diphosphate. In terms of biological role, is required not only for elongation of protein synthesis but also for the initiation of all mRNA translation through initiator tRNA(fMet) aminoacylation. The polypeptide is Methionine--tRNA ligase (Corynebacterium jeikeium (strain K411)).